The sequence spans 171 residues: UPF0312 protein SAV2687 (171 aa).

It belongs to the UPF0312 family.

The chain is UPF0312 protein SAV2687 from Staphylococcus aureus (strain Mu50 / ATCC 700699).